Consider the following 347-residue polypeptide: Holliday junction branch migration complex subunit RuvB (347 aa).

Over residues 1–10 (MAIVSSSSGR) the composition is skewed to polar residues. The interval 1-29 (MAIVSSSSGRKSPCRETALVDPQPAPEEQ) is disordered. The large ATPase domain (RuvB-L) stretch occupies residues 13 to 198 (PCRETALVDP…FGLIQRLEFY (186 aa)). ATP-binding residues include Leu-37, Arg-38, Gly-79, Lys-82, Thr-83, Thr-84, Arg-188, Tyr-198, and Arg-235. A Mg(2+)-binding site is contributed by Thr-83. The segment at 199–270 (GQTDLEAIVA…MVAEALSLHR (72 aa)) is small ATPAse domain (RuvB-S). The segment at 273-347 (HRGLDASDRR…AARSHIAEAA (75 aa)) is head domain (RuvB-H). Arg-328 and Arg-333 together coordinate DNA.

The protein belongs to the RuvB family. In terms of assembly, homohexamer. Forms an RuvA(8)-RuvB(12)-Holliday junction (HJ) complex. HJ DNA is sandwiched between 2 RuvA tetramers; dsDNA enters through RuvA and exits via RuvB. An RuvB hexamer assembles on each DNA strand where it exits the tetramer. Each RuvB hexamer is contacted by two RuvA subunits (via domain III) on 2 adjacent RuvB subunits; this complex drives branch migration. In the full resolvosome a probable DNA-RuvA(4)-RuvB(12)-RuvC(2) complex forms which resolves the HJ.

Its subcellular location is the cytoplasm. The catalysed reaction is ATP + H2O = ADP + phosphate + H(+). In terms of biological role, the RuvA-RuvB-RuvC complex processes Holliday junction (HJ) DNA during genetic recombination and DNA repair, while the RuvA-RuvB complex plays an important role in the rescue of blocked DNA replication forks via replication fork reversal (RFR). RuvA specifically binds to HJ cruciform DNA, conferring on it an open structure. The RuvB hexamer acts as an ATP-dependent pump, pulling dsDNA into and through the RuvAB complex. RuvB forms 2 homohexamers on either side of HJ DNA bound by 1 or 2 RuvA tetramers; 4 subunits per hexamer contact DNA at a time. Coordinated motions by a converter formed by DNA-disengaged RuvB subunits stimulates ATP hydrolysis and nucleotide exchange. Immobilization of the converter enables RuvB to convert the ATP-contained energy into a lever motion, pulling 2 nucleotides of DNA out of the RuvA tetramer per ATP hydrolyzed, thus driving DNA branch migration. The RuvB motors rotate together with the DNA substrate, which together with the progressing nucleotide cycle form the mechanistic basis for DNA recombination by continuous HJ branch migration. Branch migration allows RuvC to scan DNA until it finds its consensus sequence, where it cleaves and resolves cruciform DNA. This is Holliday junction branch migration complex subunit RuvB from Synechococcus sp. (strain CC9902).